Reading from the N-terminus, the 179-residue chain is Large ribosomal subunit protein uL5 (179 aa).

This sequence belongs to the universal ribosomal protein uL5 family. In terms of assembly, part of the 50S ribosomal subunit; part of the 5S rRNA/L5/L18/L25 subcomplex. Contacts the 5S rRNA and the P site tRNA. Forms a bridge to the 30S subunit in the 70S ribosome.

Functionally, this is one of the proteins that bind and probably mediate the attachment of the 5S RNA into the large ribosomal subunit, where it forms part of the central protuberance. In the 70S ribosome it contacts protein S13 of the 30S subunit (bridge B1b), connecting the 2 subunits; this bridge is implicated in subunit movement. Contacts the P site tRNA; the 5S rRNA and some of its associated proteins might help stabilize positioning of ribosome-bound tRNAs. The sequence is that of Large ribosomal subunit protein uL5 from Pseudomonas savastanoi pv. phaseolicola (strain 1448A / Race 6) (Pseudomonas syringae pv. phaseolicola (strain 1448A / Race 6)).